Here is a 342-residue protein sequence, read N- to C-terminus: MTHKIAILGASGYTGAELVRLIAEHPNMEIVALSGERKAGQSMAEVFPHLRHLDLPVLCKIDEIDFAGVDLCFCALPHKTSQEVIRALPATLKIVDLSADFRLRDPEAYRTWYGNEHVALEQQAEAVYGLTEFYRDQIRTARLVAGTGCNAATGQYVLRPLIAAGVIDLDEIILDLKCAVSGAGRSLKENLLHAELSEGANAYAVGGTHRHLGEFDQEFSALAGRPVQVQFTPHLIPANRGILATTYVRGDAQTVFQTLAAAYADEPFVHVLPFGETPSTHHVRGSNHCHIGVTGDRIAGRAIVIAALDNLTKGSSGQALQNANLMLGETETTGLTMAPLFP.

Cys149 is an active-site residue.

Belongs to the NAGSA dehydrogenase family. Type 1 subfamily.

It is found in the cytoplasm. It carries out the reaction N-acetyl-L-glutamate 5-semialdehyde + phosphate + NADP(+) = N-acetyl-L-glutamyl 5-phosphate + NADPH + H(+). The protein operates within amino-acid biosynthesis; L-arginine biosynthesis; N(2)-acetyl-L-ornithine from L-glutamate: step 3/4. Its function is as follows. Catalyzes the NADPH-dependent reduction of N-acetyl-5-glutamyl phosphate to yield N-acetyl-L-glutamate 5-semialdehyde. The chain is N-acetyl-gamma-glutamyl-phosphate reductase from Ruegeria pomeroyi (strain ATCC 700808 / DSM 15171 / DSS-3) (Silicibacter pomeroyi).